A 1127-amino-acid chain; its full sequence is MTDKLKFKTSLLNKVPPPPPKSNQPSPSTSTPASPNVNSTNNSPSVSPATTSPIPSPGMSPLLTPENNNNNTNIPHQTSLLNNSISNKSSVSFLNNSGGNTINKSSPLSQSSSNIKNGGPIRTSTTLAQFSGSSLPNTENSSPPPSSSLISSSSSPTAESLLYSEDSIASGGTVTVDPNTKNGNIYNGNGLRNNSADILPHNNHTYCVGDDGFYLFGGTLPDGSYTNDFYTFQFAIKAWTILTFGSAPSIRTRHTGVLYNNSMYIFGGYSPSGPKNDIYVFSFDTQTWSEVQTEGTKPSPRYGHTAVVESGHMIVFGGISCDQTTKQQTVNNDIFSLNLDTKQWSQVLSTCPPSPRTHHTATMHKGNMYVFGGQDQQSNQVEDIVHCYTWASNSWKSIQFEGSSMTPRSDHSAVLFQDSIFISGGSSKSQTSQNLEIYEYDLYQKKCFKISSSTIVQNRISHSSVVKGNSILFWGGCTDNSFDYFSFGKDEFEEDYQDDYESNRVQNIPKELWEASLMKKHPEILELREKTLAFTGSKSFAKTLATPSFSENRLALSHQFVLQLIMEYLERNTYHKVIAAIQKESGVLHQPTESGESRLVSLLRLVKPRLRNKNVFDTDLSLFSKEEGNDPEVAVVDHLYHDYRHFDEEEDINVWEEGEDNNRNIRKVETDNNKVQIKAATFNKLIHYLAPKEKAFDPNFLKVFLYTHSSFTTSEKLLKKLIQRYQVPNSNANEPKYKSEVVEPVRQRVVDVLKYWVDKCPWDFNAGPTSSVLVATLNNFIDGSLTRDGNSNIKKLRELKKKLQHEDVRPYSEPPPEPKVPKNIFSPQLTLAHIDELEIARQMTLVESKLFGAIPPPEFMVRVIGYGEFQYNMATSPNLMTFVNRATDVSRWIVHTVLNESRDKKNKMKMLDKFIKTTECLRQLNNFQTLHSVLQGLQHPLLLSRPDLFTPRHREIIADHEMLFSKIDNYKLYREALARSQPACVPWIDIIREDFAQIERDQPSNMNNLINFTKRQNLYEILSKIGHYQFPYNLQIVHQVATFVNKLPKYSEYDLNLLSESLQSQVNSPLAGVYQPSLIGTTGSSSSINLGSARELNNSNRDSNNITGSSSNNNSNSSNSLSPIVKL.

2 disordered regions span residues 1–82 (MTDK…SLLN) and 96–154 (NSGG…SSSS). Composition is skewed to low complexity over residues 23–53 (NQPSPSTSTPASPNVNSTNNSPSVSPATTSP) and 67–82 (NNNNNTNIPHQTSLLN). Positions 122–132 (RTSTTLAQFSG) are enriched in polar residues. The segment covering 133-154 (SSLPNTENSSPPPSSSLISSSS) has biased composition (low complexity). Kelch repeat units follow at residues 212 to 261 (GFYL…LYNN), 262 to 311 (SMYI…VESG), 313 to 366 (MIVF…MHKG), 367 to 418 (NMYV…LFQD), and 420 to 469 (IFIS…VKGN). In terms of domain architecture, LisH spans 557 to 589 (SHQFVLQLIMEYLERNTYHKVIAAIQKESGVLH). Residues 673 to 804 (NKVQIKAATF…KLRELKKKLQ (132 aa)) enclose the N-terminal Ras-GEF domain. In terms of domain architecture, Ras-GEF spans 835–1062 (DELEIARQMT…YDLNLLSESL (228 aa)). Positions 1090 to 1127 (LGSARELNNSNRDSNNITGSSSNNNSNSSNSLSPIVKL) are disordered. Positions 1103–1127 (SNNITGSSSNNNSNSSNSLSPIVKL) are enriched in low complexity.

Promotes the exchange of Ras-bound GDP by GTP. The sequence is that of Ras guanine nucleotide exchange factor F (gefF) from Dictyostelium discoideum (Social amoeba).